The chain runs to 220 residues: Small ribosomal subunit protein eS8 (220 aa).

2 disordered regions span residues 1-41 (MGIS…LSSN) and 131-151 (AKKD…KKSN). Residues 8–26 (MHKRRATGGKQKAWRKKRK) are compositionally biased toward basic residues.

The protein belongs to the eukaryotic ribosomal protein eS8 family.

The polypeptide is Small ribosomal subunit protein eS8 (RPS8) (Oryza sativa subsp. japonica (Rice)).